The sequence spans 398 residues: Pheromone receptor transcription activator (398 aa).

3 disordered regions span residues 1 to 30 (MMDE…YLED), 101 to 125 (TDQN…ESGY), and 254 to 317 (PSTG…DRPP). One can recognise an MADS-box domain in the interval 20-74 (GSSQGNSYLEDRQKRQNTFTKRKAGIFKKANELALLTGSEVMVLVVSETGLVHTF). Residues 106–121 (SQASQAKQSSAQLSDS) are compositionally biased toward low complexity. Composition is skewed to polar residues over residues 262 to 273 (TTGQHSVNSPPS) and 282 to 294 (NKSF…PQTP).

The protein resides in the nucleus. Its function is as follows. In response to mating-pheromone signaling or nitrogen starvation, it interacts with mat1-Pc. This activates the expression of one of two mating-type-specific genes sxa2 or map3, which leads to inactivation of the P-factor. May also interact with mat1-Mc. This Schizosaccharomyces pombe (strain 972 / ATCC 24843) (Fission yeast) protein is Pheromone receptor transcription activator (map1).